A 2030-amino-acid chain; its full sequence is Dedicator of cytokinesis protein 3 (2030 aa).

Residues 6 to 67 form the SH3 domain; that stretch reads EEEKYGVVIC…PANYIHLKKA (62 aa). Residues 421–599 form the C2 DOCK-type domain; the sequence is RNDLYLTLEK…ESFFISTQLS (179 aa). The DOCKER domain maps to 1228 to 1635; that stretch reads KSEINKEEMY…LYHEFPGLDK (408 aa). 4 disordered regions span residues 1641-1662, 1734-1771, 1849-1927, and 1951-2030; these read SGTS…PESI, SSSQ…SLPD, DTPP…ADED, and QPCR…RGEQ. Ser-1658 bears the Phosphoserine mark. The segment covering 1734 to 1754 has biased composition (low complexity); that stretch reads SSSQASPSSSSLSSTHSAPSQ. Residues 1755 to 1765 show a composition bias toward polar residues; the sequence is MITSAPSSARG. Residues 1880–1902 show a composition bias toward low complexity; the sequence is GSNSTLSGSASSGVSSLSESNFG. Residues 1967–1977 are compositionally biased toward pro residues; the sequence is PMDPPALPPKP. An SH3-binding motif is present at residues 1970–1976; it reads PPALPPK. 2 stretches are compositionally biased toward basic and acidic residues: residues 1984-2001 and 2014-2030; these read ALEH…ERPR and AKEE…RGEQ.

The protein belongs to the DOCK family. Interacts with presenilin proteins PSEN1 and PSEN2. Interacts with CRK. As to expression, in normal brains, it is localized in the neuropil, and occasionally in the pyramidal cells, while in Alzheimer disease brains, it is associated with neurofibrillary tangles.

It is found in the cytoplasm. In terms of biological role, potential guanine nucleotide exchange factor (GEF). GEF proteins activate some small GTPases by exchanging bound GDP for free GTP. Its interaction with presenilin proteins as well as its ability to stimulate Tau/MAPT phosphorylation suggest that it may be involved in Alzheimer disease. Ectopic expression in nerve cells decreases the secretion of amyloid-beta APBA1 protein and lowers the rate of cell-substratum adhesion, suggesting that it may affect the function of some small GTPase involved in the regulation of actin cytoskeleton or cell adhesion receptors. The polypeptide is Dedicator of cytokinesis protein 3 (DOCK3) (Homo sapiens (Human)).